We begin with the raw amino-acid sequence, 650 residues long: Acetyl-coenzyme A synthetase (650 aa).

CoA-binding positions include 191–194, T311, and N335; that span reads RGGR. Residues 387–389, 411–416, D500, and R515 contribute to the ATP site; these read GEP and DTWWQT. S523 contacts CoA. R526 contributes to the ATP binding site. Residues V537, H539, and V542 each contribute to the Mg(2+) site. R584 contacts CoA. N6-acetyllysine is present on K609.

It belongs to the ATP-dependent AMP-binding enzyme family. Mg(2+) serves as cofactor. Post-translationally, acetylated. Deacetylation by the SIR2-homolog deacetylase activates the enzyme.

The enzyme catalyses acetate + ATP + CoA = acetyl-CoA + AMP + diphosphate. In terms of biological role, catalyzes the conversion of acetate into acetyl-CoA (AcCoA), an essential intermediate at the junction of anabolic and catabolic pathways. AcsA undergoes a two-step reaction. In the first half reaction, AcsA combines acetate with ATP to form acetyl-adenylate (AcAMP) intermediate. In the second half reaction, it can then transfer the acetyl group from AcAMP to the sulfhydryl group of CoA, forming the product AcCoA. This is Acetyl-coenzyme A synthetase from Shewanella sp. (strain W3-18-1).